The chain runs to 159 residues: Large ribosomal subunit protein uL10 (159 aa).

It belongs to the universal ribosomal protein uL10 family. Part of the ribosomal stalk of the 50S ribosomal subunit. The N-terminus interacts with L11 and the large rRNA to form the base of the stalk. The C-terminus forms an elongated spine to which L12 dimers bind in a sequential fashion forming a multimeric L10(L12)X complex.

In terms of biological role, forms part of the ribosomal stalk, playing a central role in the interaction of the ribosome with GTP-bound translation factors. This Campylobacter jejuni subsp. jejuni serotype O:2 (strain ATCC 700819 / NCTC 11168) protein is Large ribosomal subunit protein uL10 (rplJ).